The primary structure comprises 478 residues: 3-isopropylmalate dehydratase large subunit (478 aa).

[4Fe-4S] cluster contacts are provided by cysteine 359, cysteine 420, and cysteine 423.

It belongs to the aconitase/IPM isomerase family. LeuC type 1 subfamily. Heterodimer of LeuC and LeuD. Requires [4Fe-4S] cluster as cofactor.

It catalyses the reaction (2R,3S)-3-isopropylmalate = (2S)-2-isopropylmalate. Its pathway is amino-acid biosynthesis; L-leucine biosynthesis; L-leucine from 3-methyl-2-oxobutanoate: step 2/4. Functionally, catalyzes the isomerization between 2-isopropylmalate and 3-isopropylmalate, via the formation of 2-isopropylmaleate. The protein is 3-isopropylmalate dehydratase large subunit of Psychrobacter sp. (strain PRwf-1).